The following is a 394-amino-acid chain: Venom metalloproteinase antarease TserMP_A (394 aa).

An N-terminal signal peptide occupies residues 1 to 16; that stretch reads MISYLASIFLLATVSA. Residues 17 to 157 constitute a propeptide that is removed on maturation; that stretch reads VPSGRVEVVF…NAENVSRMAR (141 aa). In terms of domain architecture, Peptidase M12B spans 162-391; the sequence is IVVEYYIVTD…PTASCIFQQC (230 aa). A disulfide bond links Cys-295 and Cys-386. Residue His-319 participates in Zn(2+) binding. Glu-320 is an active-site residue. Zn(2+) contacts are provided by His-323 and His-329.

The cofactor is Zn(2+). Contains 4 disulfide bonds. Expressed by the venom gland.

It localises to the secreted. With respect to regulation, inhibited by EDTA. Acts as a metalloprotease. Penetrates intact tissue and specifically cleaves the vesicle-associated membrane protein 2 (VAMP2) (part of the SNARE complex) involved in pancreatic secretion, thus disrupting the normal vesicular traffic. The protein is Venom metalloproteinase antarease TserMP_A of Tityus serrulatus (Brazilian scorpion).